The chain runs to 24 residues: Brevinin-1BYc (24 aa).

Cysteine 18 and cysteine 24 are disulfide-bonded.

In terms of tissue distribution, expressed by the skin glands.

The protein resides in the secreted. Its function is as follows. Antibacterial activity against Gram-positive bacterium S.aureus. Weak antifungal activity against C.albicans. This is Brevinin-1BYc from Rana boylii (Foothill yellow-legged frog).